Here is a 214-residue protein sequence, read N- to C-terminus: Orotate phosphoribosyltransferase (214 aa).

Lys-26 contacts 5-phospho-alpha-D-ribose 1-diphosphate. 34–35 is an orotate binding site; the sequence is FF. Residues 72–73, Arg-99, Lys-100, Lys-103, His-105, and 124–132 each bind 5-phospho-alpha-D-ribose 1-diphosphate; these read YK and DDVITAGTA. 2 residues coordinate orotate: Thr-128 and Arg-156.

It belongs to the purine/pyrimidine phosphoribosyltransferase family. PyrE subfamily. Homodimer. The cofactor is Mg(2+).

It carries out the reaction orotidine 5'-phosphate + diphosphate = orotate + 5-phospho-alpha-D-ribose 1-diphosphate. It functions in the pathway pyrimidine metabolism; UMP biosynthesis via de novo pathway; UMP from orotate: step 1/2. Functionally, catalyzes the transfer of a ribosyl phosphate group from 5-phosphoribose 1-diphosphate to orotate, leading to the formation of orotidine monophosphate (OMP). The sequence is that of Orotate phosphoribosyltransferase from Mannheimia succiniciproducens (strain KCTC 0769BP / MBEL55E).